Consider the following 556-residue polypeptide: Delta-1-pyrroline-5-carboxylate dehydrogenase 12A1, mitochondrial (556 aa).

NAD(+) is bound at residue 282–287 (GSSRVA). Residue glutamate 301 is the Proton acceptor of the active site. Residue cysteine 336 is the Nucleophile of the active site.

Belongs to the aldehyde dehydrogenase family. Highly expressed in flowers. Constitutively expressed at low levels in the other tissues. Highly expressed in pollen grains and tissues undergoing cell death. Expressed in old leaves, mature siliques and developing embryos.

It localises to the mitochondrion matrix. The catalysed reaction is (S)-1-pyrroline-5-carboxylate + NAD(+) + 2 H2O = L-glutamate + NADH + H(+). It participates in amino-acid degradation; L-proline degradation into L-glutamate; L-glutamate from L-proline: step 2/2. Its function is as follows. Plays a role in the inhibition of programmed cell death by converting the toxic proline catabolism intermediate (s)-1-pyrroline-5-carboxylate (P5C) to glutamate. The polypeptide is Delta-1-pyrroline-5-carboxylate dehydrogenase 12A1, mitochondrial (Arabidopsis thaliana (Mouse-ear cress)).